Here is a 1243-residue protein sequence, read N- to C-terminus: MNSPSPFGQNEWLVEEMYRKFREDPSSVDPSWHEFLVDYSPEPTNDAPAGNGKPAAAPTAPPEPASAPAPKPASTNGGAPPAKADTSTTRAPEKKPEEKTSPAPKAKTAAPAGVSDDDETQVLRGAAAAVVKNMSASLDVPTATSVRAIPAKAMIDNRIVINNHLKRTRGGKISFTHLLGYAIVQAVKKFPNMNRHFAEIDGKPVAVTPAHTNLGLAIDLPGKDGKRSLVVAAIKNCETMHFGQFIAAYEDIVRRARDGKLTAEDFAGVTISLTNPGTIGTVHSVPRLMKGQGAIVGAGAMEYPAEFQGASEERIAELGVGKLMTLTSTYDHRIIQGAESGDFLRTIHTLLLDDEFYDEIFRELGIPHEPVRWRIDNPDSIEDKNARVIELIAAYRNRGHLMADIDPLRLDKTRFRSHPDLDVNTHGLTLWDLDREFKVNGFAGKTHKKLRDILGLLRDAYCRHIGVEYTHILEPEQQQWLQERIEVKHEKPTVAEQKYILSKLNAAEAFETFLQTKYVGQKRFSLEGAETVIPMMDAAIDQCAEHGLDEVVIGMPHRGRLNVLANIVGKPYSQIFTEFEGNLNPSQAHGSGDVKYHLGANGTYIQMFGDNDIDVSLVANPSHLEAVDPVLEGLVRAKQDILDKGNGPDGFTVVPMMLHGDAAFAGQGVVAETLNLALLRGYRTGGTIHIIVNNQIGFTTSPYDSRSSEYCTDVAKMIGAPIFHVNGDDPEACVWVAKLAVDFRQKFKKDVVIDMLCYRRRGHNEGDDPSMTQPTMYDVIDTKRGVRKSYTEALIGRGDISMKEAEDALRDYQGQLERVFNEVRELEKHAIAPSSSVESDQMVPAGMSTAVDKSLLARIGDAHLGYPDDFNVHPRVKPVLEKRREMAYEGKVDWAFAELLALGTFLAEGKTIRFTGQDTRRGTFTQRHSVIIDRQTGREFTPLDLLTVDSDGNPTGGKFMAYDSALSEFAAVGFEYGYSVGNPNALVLWEAQFGDFVNGAQSIIDEFISSGEAKWGQLSDVVLLLPHGHEGQGPDHTSGRIERFLLLWAEGSMTIAMPSTPANYFHLLRRHGLDGIHRPLIVFTPKSMLRNKAAVSDLKDFTEMKFRSVLEEPTYTEGTGDRSKAKRILLTSGKLYYELAARKSKEGRDDVAILRLEQLAPLPKRRLAATLDEYPNAEQYFWVQEEPANQGAWPTLGLTLPEVLPEKLAGIKRISRRAMSAPSSGSSKVHAVEQQEIIDEAFG.

Residues 1-40 are 2-oxoglutarate dehydrogenase E1, N-terminal part; the sequence is MNSPSPFGQNEWLVEEMYRKFREDPSSVDPSWHEFLVDYS. Over residues 22–36 the composition is skewed to basic and acidic residues; sequence REDPSSVDPSWHEFL. Residues 22-118 form a disordered region; it reads REDPSSVDPS…AAPAGVSDDD (97 aa). A linker region spans residues 41–103; sequence PEPTNDAPAG…KKPEEKTSPA (63 aa). Residues 47-58 are compositionally biased toward low complexity; sequence APAGNGKPAAAP. Residues 59–71 are compositionally biased toward pro residues; that stretch reads TAPPEPASAPAPK. Residues 91–100 are compositionally biased toward basic and acidic residues; that stretch reads APEKKPEEKT. Over residues 101 to 112 the composition is skewed to low complexity; the sequence is SPAPKAKTAAPA. Positions 104–353 are succinyltransferase E2; it reads PKAKTAAPAG…LRTIHTLLLD (250 aa). The Proton acceptor; for succinyltransferase activity role is filled by His-332. The interval 354–1243 is 2-oxoglutarate dehydrogenase E1, C-terminal part; sequence DEFYDEIFRE…QQEIIDEAFG (890 aa). A thiamine diphosphate-binding site is contributed by Arg-558. Residues His-597 and Ser-622 each contribute to the 2-oxoglutarate site. Thiamine diphosphate-binding residues include Ser-622, Leu-624, Asp-661, Ala-662, Ala-663, and Asn-694. Residue Asp-661 participates in Mg(2+) binding. 2 residues coordinate Mg(2+): Asn-694 and Ile-696. A coiled-coil region spans residues 799 to 831; it reads DISMKEAEDALRDYQGQLERVFNEVRELEKHAI. His-1036 provides a ligand contact to 2-oxoglutarate. Acetyl-CoA contacts are provided by Thr-1054, Arg-1070, Lys-1105, Ser-1108, Gln-1158, Arg-1165, and Arg-1166.

It belongs to the 2-oxoacid dehydrogenase family. Kgd subfamily. Homodimer. The 2-oxoglutarate dehydrogenase (ODH) complex contains multiple copies of three enzymatic components: 2-oxoglutarate dehydrogenase (E1), dihydrolipoamide succinyltransferase (E2) and lipoamide dehydrogenase (E3). Mg(2+) serves as cofactor. It depends on thiamine diphosphate as a cofactor.

It catalyses the reaction glyoxylate + 2-oxoglutarate + H(+) = 2-hydroxy-3-oxoadipate + CO2. The enzyme catalyses 2-oxoglutarate + H(+) = succinate semialdehyde + CO2. It carries out the reaction N(6)-[(R)-lipoyl]-L-lysyl-[protein] + 2-oxoglutarate + H(+) = N(6)-[(R)-S(8)-succinyldihydrolipoyl]-L-lysyl-[protein] + CO2. The catalysed reaction is N(6)-[(R)-dihydrolipoyl]-L-lysyl-[protein] + succinyl-CoA = N(6)-[(R)-S(8)-succinyldihydrolipoyl]-L-lysyl-[protein] + CoA. It functions in the pathway carbohydrate metabolism; tricarboxylic acid cycle; succinate from 2-oxoglutarate (transferase route): step 1/2. It participates in carbohydrate metabolism; tricarboxylic acid cycle; succinyl-CoA from 2-oxoglutarate (dehydrogenase route): step 1/1. Alpha-ketoglutarate dehydrogenase and decarboxylase activities are inhibited by unphosphorylated GarA, and allosterically activated by acetyl-CoA, the main substrate of the TCA cycle. In terms of biological role, shows three enzymatic activities that share a first common step, the attack of thiamine-PP on 2-oxoglutarate (alpha-ketoglutarate, KG), leading to the formation of an enamine-thiamine-PP intermediate upon decarboxylation. Thus, displays KGD activity, catalyzing the decarboxylation from five-carbon 2-oxoglutarate to four-carbon succinate semialdehyde (SSA). Also catalyzes C-C bond formation between the activated aldehyde formed after decarboxylation of alpha-ketoglutarate and the carbonyl of glyoxylate (GLX), to yield 2-hydroxy-3-oxoadipate (HOA), which spontaneously decarboxylates to form 5-hydroxylevulinate (HLA). And is also a component of the 2-oxoglutarate dehydrogenase (ODH) complex, that catalyzes the overall conversion of 2-oxoglutarate to succinyl-CoA and CO(2). The KG decarboxylase and KG dehydrogenase reactions provide two alternative, tightly regulated, pathways connecting the oxidative and reductive branches of the TCA cycle. This Mycolicibacterium vanbaalenii (strain DSM 7251 / JCM 13017 / BCRC 16820 / KCTC 9966 / NRRL B-24157 / PYR-1) (Mycobacterium vanbaalenii) protein is Multifunctional 2-oxoglutarate metabolism enzyme (kgd).